Here is a 146-residue protein sequence, read N- to C-terminus: Putative pre-16S rRNA nuclease (146 aa).

The protein belongs to the YqgF nuclease family.

The protein localises to the cytoplasm. In terms of biological role, could be a nuclease involved in processing of the 5'-end of pre-16S rRNA. The polypeptide is Putative pre-16S rRNA nuclease (Pseudomonas syringae pv. syringae (strain B728a)).